Consider the following 157-residue polypeptide: 3-dehydroquinate dehydratase (157 aa).

Y22 functions as the Proton acceptor in the catalytic mechanism. Substrate is bound by residues N73, H79, and D86. H99 serves as the catalytic Proton donor. Substrate-binding positions include 100 to 101 and R110; that span reads LS.

Belongs to the type-II 3-dehydroquinase family. As to quaternary structure, homododecamer.

It carries out the reaction 3-dehydroquinate = 3-dehydroshikimate + H2O. It functions in the pathway metabolic intermediate biosynthesis; chorismate biosynthesis; chorismate from D-erythrose 4-phosphate and phosphoenolpyruvate: step 3/7. Its function is as follows. Catalyzes a trans-dehydration via an enolate intermediate. The chain is 3-dehydroquinate dehydratase from Roseiflexus castenholzii (strain DSM 13941 / HLO8).